The chain runs to 229 residues: MPKKKGFTPLPYLASIVFLPWWVSLSFNKSLEPWVTNWWNTRQSETFLNDIQERNVLERFIELEELFLLDEMLKENPETRMKNLRIGIHNETIQLVKTDNEYHLHTILHFSTNIICFAILSVYSILGNEELVILNSWVQEFLYNLSDTIKAFSILLVTDLWIGFHSPHGWELMIGSVYNDFGLAHNEQIISGLVSTFPVILDTIVKYWIFHYLNRVSPSLVVIYHSMND.

Helical transmembrane passes span 7 to 27, 114 to 134, 154 to 174, and 189 to 209; these read FTPL…SLSF, IICF…LVIL, ILLV…ELMI, and IISG…KYWI.

Belongs to the CemA family.

The protein resides in the plastid. Its subcellular location is the chloroplast inner membrane. The enzyme catalyses K(+)(in) + H(+)(out) = K(+)(out) + H(+)(in). Contributes to K(+)/H(+) antiport activity by supporting proton efflux to control proton extrusion and homeostasis in chloroplasts in a light-dependent manner to modulate photosynthesis. Prevents excessive induction of non-photochemical quenching (NPQ) under continuous-light conditions. Indirectly promotes efficient inorganic carbon uptake into chloroplasts. This chain is Potassium/proton antiporter CemA, found in Acorus calamus var. americanus (American sweet flag).